The sequence spans 97 residues: Vitelline membrane protein 15a-2 (97 aa).

Residues 1–19 (MNKIIAALVLFTAVIGALA) form the signal peptide. Residues 20 to 23 (DYPA) are required for binding to the gut receptor. A disordered region spans residues 26–46 (PPPPKPYHAPPPPPYHAPPHH). In terms of domain architecture, VM spans 61-97 (KAPAAKCGANLLVGCAPSVAHVPCVPVHPHPPPPAHY).

Belongs to the vitelline membrane protein family. As to expression, expressed in the anterior region of the follicle cells.

The protein resides in the secreted. Functionally, has an oostatic activity. Inhibits trypsin biosynthesis in the midgut epithelial cells which indirectly reduces the vitellogenin concentration in the hemolymph resulting in inhibition of oocyte development. This is Vitelline membrane protein 15a-2 (15a-2) from Aedes aegypti (Yellowfever mosquito).